The following is a 275-amino-acid chain: Proteasome subunit beta (275 aa).

A propeptide spans 1–52 (MQDTTANQVAANATSSFTEHLQRNRPGLLPYNQPFPAALTGAGSQPLQVPHA) (removed in mature form; by autocatalysis). Catalysis depends on Thr-53, which acts as the Nucleophile.

Belongs to the peptidase T1B family. In terms of assembly, the 20S proteasome core is composed of 14 alpha and 14 beta subunits that assemble into four stacked heptameric rings, resulting in a barrel-shaped structure. The two inner rings, each composed of seven catalytic beta subunits, are sandwiched by two outer rings, each composed of seven alpha subunits. The catalytic chamber with the active sites is on the inside of the barrel. Has a gated structure, the ends of the cylinder being occluded by the N-termini of the alpha-subunits. Is capped by the proteasome-associated ATPase, ARC.

Its subcellular location is the cytoplasm. It catalyses the reaction Cleavage of peptide bonds with very broad specificity.. The protein operates within protein degradation; proteasomal Pup-dependent pathway. The formation of the proteasomal ATPase ARC-20S proteasome complex, likely via the docking of the C-termini of ARC into the intersubunit pockets in the alpha-rings, may trigger opening of the gate for substrate entry. Interconversion between the open-gate and close-gate conformations leads to a dynamic regulation of the 20S proteasome proteolysis activity. Component of the proteasome core, a large protease complex with broad specificity involved in protein degradation. This Arthrobacter sp. (strain FB24) protein is Proteasome subunit beta.